The sequence spans 164 residues: Putative 4-hydroxy-4-methyl-2-oxoglutarate aldolase (164 aa).

Substrate is bound by residues 80–83 and Arg-102; that span reads GGNL. Asp-103 contributes to the a divalent metal cation binding site.

This sequence belongs to the class II aldolase/RraA-like family. Homotrimer. It depends on a divalent metal cation as a cofactor.

The enzyme catalyses 4-hydroxy-4-methyl-2-oxoglutarate = 2 pyruvate. It carries out the reaction oxaloacetate + H(+) = pyruvate + CO2. Functionally, catalyzes the aldol cleavage of 4-hydroxy-4-methyl-2-oxoglutarate (HMG) into 2 molecules of pyruvate. Also contains a secondary oxaloacetate (OAA) decarboxylase activity due to the common pyruvate enolate transition state formed following C-C bond cleavage in the retro-aldol and decarboxylation reactions. The protein is Putative 4-hydroxy-4-methyl-2-oxoglutarate aldolase of Paraburkholderia phytofirmans (strain DSM 17436 / LMG 22146 / PsJN) (Burkholderia phytofirmans).